The chain runs to 249 residues: MYTLVLLRHGESAWNKENRFTGWTDVDLSPQGIEEAHRAATLLHDGGYSFDLAYTSVLKRAIRTLWIVLDDLDLMYLPVHHTWRLNERHYGALQGLDKRETTEKFGKDQVQAWRRGYAVRPPALEETDPRHPRFDPRYAGLKKDDLPATESLEDTLARVVPYWNETIVPTLQDGKRILIAAHGNSIRALVKYLDGVPDDVITGLNIPTGFPLVYELDDDLHPIRHYYLGDEEEIRRATESVASQTATKK.

Substrate contacts are provided by residues 8 to 15 (RHGESAWN), 21 to 22 (TG), arginine 60, 87 to 90 (ERHY), lysine 98, 114 to 115 (RR), and 183 to 184 (GN). Histidine 9 acts as the Tele-phosphohistidine intermediate in catalysis. Catalysis depends on glutamate 87, which acts as the Proton donor/acceptor.

It belongs to the phosphoglycerate mutase family. BPG-dependent PGAM subfamily.

It catalyses the reaction (2R)-2-phosphoglycerate = (2R)-3-phosphoglycerate. It functions in the pathway carbohydrate degradation; glycolysis; pyruvate from D-glyceraldehyde 3-phosphate: step 3/5. Functionally, catalyzes the interconversion of 2-phosphoglycerate and 3-phosphoglycerate. This Methanosphaerula palustris (strain ATCC BAA-1556 / DSM 19958 / E1-9c) protein is 2,3-bisphosphoglycerate-dependent phosphoglycerate mutase.